The sequence spans 71 residues: uncharacterized protein (71 aa).

A disordered region spans residues 1–71 (MLFETLKSLS…AFFSRPFYSE (71 aa)). The span at 7-33 (KSLSQQNGGQFSDEQSFESPISSSFNG) shows a compositional bias: polar residues. The segment covering 35-65 (SMPFGSPSSTMSSSYKGNTNSSTKSSSAFFS) has biased composition (low complexity).

This is an uncharacterized protein from Dictyostelium discoideum (Social amoeba).